Reading from the N-terminus, the 304-residue chain is Acetylglutamate kinase (304 aa).

Substrate is bound by residues 74-75 (GG), Arg-96, and Asn-201.

Belongs to the acetylglutamate kinase family. ArgB subfamily.

The protein localises to the cytoplasm. It carries out the reaction N-acetyl-L-glutamate + ATP = N-acetyl-L-glutamyl 5-phosphate + ADP. It participates in amino-acid biosynthesis; L-arginine biosynthesis; N(2)-acetyl-L-ornithine from L-glutamate: step 2/4. In terms of biological role, catalyzes the ATP-dependent phosphorylation of N-acetyl-L-glutamate. In Alkalilimnicola ehrlichii (strain ATCC BAA-1101 / DSM 17681 / MLHE-1), this protein is Acetylglutamate kinase.